A 213-amino-acid chain; its full sequence is Orotate phosphoribosyltransferase (213 aa).

Residue Lys-26 participates in 5-phospho-alpha-D-ribose 1-diphosphate binding. Phe-34–Phe-35 is an orotate binding site. Residues Tyr-72–Lys-73, Arg-99, Lys-100, Lys-103, His-105, and Asp-124–Ala-132 contribute to the 5-phospho-alpha-D-ribose 1-diphosphate site. 2 residues coordinate orotate: Thr-128 and Arg-156.

This sequence belongs to the purine/pyrimidine phosphoribosyltransferase family. PyrE subfamily. In terms of assembly, homodimer. It depends on Mg(2+) as a cofactor.

It catalyses the reaction orotidine 5'-phosphate + diphosphate = orotate + 5-phospho-alpha-D-ribose 1-diphosphate. Its pathway is pyrimidine metabolism; UMP biosynthesis via de novo pathway; UMP from orotate: step 1/2. In terms of biological role, catalyzes the transfer of a ribosyl phosphate group from 5-phosphoribose 1-diphosphate to orotate, leading to the formation of orotidine monophosphate (OMP). This chain is Orotate phosphoribosyltransferase, found in Vibrio vulnificus (strain CMCP6).